An 89-amino-acid chain; its full sequence is Large ribosomal subunit protein bL27 (89 aa).

Residues 1 to 21 (MAHKKGASSSRNGRDSNAQRL) form a disordered region. Residues 7-19 (ASSSRNGRDSNAQ) are compositionally biased toward polar residues.

The protein belongs to the bacterial ribosomal protein bL27 family.

The polypeptide is Large ribosomal subunit protein bL27 (Frankia alni (strain DSM 45986 / CECT 9034 / ACN14a)).